The primary structure comprises 349 residues: PDZ and LIM domain protein 2 (349 aa).

The region spanning 1 to 84 is the PDZ domain; it reads MALTVNVVGP…PLRLQLDRSQ (84 aa). Disordered regions lie at residues 72–95 and 108–147; these read SASPLRLQLDRSQTASPGQINGEG and LRTHHNSQSSQRSACFSPASLSPRPDSPFSTPPPTSPIAL. 2 stretches are compositionally biased toward polar residues: residues 81-90 and 108-121; these read DRSQTASPGQ and LRTHHNSQSSQRSA. Phosphoserine occurs at positions 124, 127, 129, 134, and 137. A phosphothreonine mark is found at T138 and T142. Phosphoserine occurs at positions 143 and 163. 2 disordered regions span residues 168–212 and 250–272; these read ATHH…SSLD and ERGGTPAFVPSSLSPKASLPTSR. The segment covering 176–192 has biased composition (polar residues); the sequence is GQPTSQQAGHSSPSDST. S199, S204, S205, S209, S210, and S263 each carry phosphoserine. Over residues 199 to 211 the composition is skewed to low complexity; that stretch reads SPGRPSSPRLSSL. The segment covering 260–270 has biased composition (polar residues); that stretch reads SSLSPKASLPT. Residues 281–341 enclose the LIM zinc-binding domain; that stretch reads HTCEKCSVNI…EKHARQRYSM (61 aa).

As to quaternary structure, interacts with alpha-actinins ACTN1 and ACTN4, FLNA and MYH9. Interacts (via LIM zinc-binding domain) with MKRN2. Highly expressed in cornea and lung. Expressed at intermediate level in sclera and combined tissues of the eye irido-corneal angle. Specifically expressed in the corneal epithelial cells but not in other corneal layers.

The protein resides in the cytoplasm. Its subcellular location is the cytoskeleton. Functionally, probable adapter protein located at the actin cytoskeleton that promotes cell attachment. Necessary for the migratory capacity of epithelial cells. Overexpression enhances cell adhesion to collagen and fibronectin and suppresses anchorage independent growth. May contribute to tumor cell migratory capacity. In Rattus norvegicus (Rat), this protein is PDZ and LIM domain protein 2 (Pdlim2).